The following is a 155-amino-acid chain: Myelin basic protein (155 aa).

Disordered stretches follow at residues 1–70 (MASA…GRQT) and 109–155 (TDGQ…PARR). At alanine 2 the chain carries N-acetylalanine. Basic and acidic residues-rich tracts occupy residues 37 to 49 (GSRKVPEKGKEPA) and 123 to 134 (KSKEAYRGRRDG).

It belongs to the myelin basic protein family.

It localises to the myelin membrane. In terms of biological role, this protein may function to maintain proper structure of myelin. This is Myelin basic protein (MBP) from Heterodontus francisci (Horn shark).